Here is a 131-residue protein sequence, read N- to C-terminus: UPF0102 protein YraN (131 aa).

The protein belongs to the UPF0102 family.

This is UPF0102 protein YraN from Salmonella agona (strain SL483).